Consider the following 256-residue polypeptide: Thioredoxin-dependent peroxide reductase, mitochondrial (256 aa).

Residues 1–61 constitute a mitochondrion transit peptide; that stretch reads MAAAVGRLLR…KLFSTSSSYH (61 aa). The 159-residue stretch at 63–221 folds into the Thioredoxin domain; that stretch reads PAVTQHAPYF…TLRLVKAFQY (159 aa). Lysine 83 bears the N6-succinyllysine mark. Lysine 91 is modified (N6-acetyllysine; alternate). N6-succinyllysine; alternate is present on lysine 91. The active-site Cysteine sulfenic acid (-SOH) intermediate is the cysteine 108. Threonine 146 is subject to Phosphothreonine.

It belongs to the peroxiredoxin family. AhpC/Prx1 subfamily. As to quaternary structure, homodimer; disulfide-linked, upon oxidation. 6 homodimers assemble to form a ring-like dodecamer. Interacts with NEK6. Interacts with LRRK2. Interacts with MAP3K13. Interacts with RPS6KC1 (via PX domain). In terms of processing, phosphorylated by LRRK2; phosphorylation reduces perodixase activity. The enzyme can be inactivated by further oxidation of the cysteine sulfenic acid (C(P)-SOH) to sulphinic acid (C(P)-SO2H) and sulphonic acid (C(P)-SO3H) instead of its condensation to a disulfide bond. Post-translationally, S-palmitoylated.

The protein localises to the mitochondrion. Its subcellular location is the cytoplasm. It is found in the early endosome. The enzyme catalyses a hydroperoxide + [thioredoxin]-dithiol = an alcohol + [thioredoxin]-disulfide + H2O. Functionally, thiol-specific peroxidase that catalyzes the reduction of hydrogen peroxide and organic hydroperoxides to water and alcohols, respectively. Plays a role in cell protection against oxidative stress by detoxifying peroxides. Acts synergistically with MAP3K13 to regulate the activation of NF-kappa-B in the cytosol. Required for the maintenance of physical strength. This Pongo abelii (Sumatran orangutan) protein is Thioredoxin-dependent peroxide reductase, mitochondrial (PRDX3).